The sequence spans 126 residues: Glycine cleavage system H protein (126 aa).

The Lipoyl-binding domain maps to 22 to 104 (VAYVGITDYA…YGEGWLIKMK (83 aa)). Position 63 is an N6-lipoyllysine (K63).

The protein belongs to the GcvH family. In terms of assembly, the glycine cleavage system is composed of four proteins: P, T, L and H. (R)-lipoate serves as cofactor.

Functionally, the glycine cleavage system catalyzes the degradation of glycine. The H protein shuttles the methylamine group of glycine from the P protein to the T protein. The polypeptide is Glycine cleavage system H protein (Bacteroides fragilis (strain YCH46)).